The sequence spans 834 residues: Protein EFR3 homolog cmp44E (834 aa).

The HEAT repeat unit spans residues 120 to 156; that stretch reads NLFVESFLRMVQKLLEDSNPNLKIMATNSFVKFANIN. Residues 595 to 612 form a helical membrane-spanning segment; it reads LHAISIGLLVLISRVSGI.

The protein belongs to the EFR3 family. Expression during embryogenesis is ubiquitous with notably higher levels in the CNS and brain.

Its subcellular location is the membrane. Its function is as follows. An essential gene required for embryogenesis; required for cell viability. The sequence is that of Protein EFR3 homolog cmp44E (stmA) from Drosophila melanogaster (Fruit fly).